The chain runs to 277 residues: RAD52 motif-containing protein 1 (277 aa).

The RRM domain maps to 15–95 (QTLLVWGLEP…SPLKVCVCTK (81 aa)).

Homodimer.

It is found in the nucleus. It localises to the cytoplasm. Its subcellular location is the nucleolus. Its function is as follows. Confers resistance to the antitumor agent cisplatin. Binds preferentially to sites of DNA modified by cisplatin in vitro. Binds to double-stranded DNA in a cooperative manner resulting in the formation of filament-like structures. Binds to single-stranded DNA with no cooperativity. Binds to RNA. This chain is RAD52 motif-containing protein 1 (RDM1), found in Gallus gallus (Chicken).